The chain runs to 764 residues: 5-methyltetrahydropteroyltriglutamate--homocysteine methyltransferase (764 aa).

Residues 16-19 and lysine 121 each bind 5-methyltetrahydropteroyltri-L-glutamate; that span reads RELK. L-homocysteine-binding positions include 440-442 and glutamate 493; that span reads IGS. Residues 440–442 and glutamate 493 contribute to the L-methionine site; that span reads IGS. Residues 524-525 and tryptophan 570 contribute to the 5-methyltetrahydropteroyltri-L-glutamate site; that span reads RC. Position 608 (aspartate 608) interacts with L-homocysteine. An L-methionine-binding site is contributed by aspartate 608. Glutamate 614 is a binding site for 5-methyltetrahydropteroyltri-L-glutamate. Residues histidine 650, cysteine 652, and glutamate 674 each contribute to the Zn(2+) site. Residue histidine 703 is the Proton donor of the active site. Cysteine 735 contributes to the Zn(2+) binding site.

This sequence belongs to the vitamin-B12 independent methionine synthase family. Zn(2+) is required as a cofactor.

The catalysed reaction is 5-methyltetrahydropteroyltri-L-glutamate + L-homocysteine = tetrahydropteroyltri-L-glutamate + L-methionine. It participates in amino-acid biosynthesis; L-methionine biosynthesis via de novo pathway; L-methionine from L-homocysteine (MetE route): step 1/1. In terms of biological role, catalyzes the transfer of a methyl group from 5-methyltetrahydrofolate to homocysteine resulting in methionine formation. This is 5-methyltetrahydropteroyltriglutamate--homocysteine methyltransferase from Burkholderia lata (strain ATCC 17760 / DSM 23089 / LMG 22485 / NCIMB 9086 / R18194 / 383).